Consider the following 183-residue polypeptide: ESX-1 secretion-associated protein EspH (183 aa).

The segment covering 1 to 16 (MVDPPGNDDDHGDLDA) has biased composition (acidic residues). The disordered stretch occupies residues 1-32 (MVDPPGNDDDHGDLDALDFSAAHTNEASPLDA).

The polypeptide is ESX-1 secretion-associated protein EspH (Mycobacterium tuberculosis (strain ATCC 25618 / H37Rv)).